The following is a 704-amino-acid chain: Phytyl ester synthase 1, chloroplastic (704 aa).

A chloroplast-targeting transit peptide spans 1 to 27 (MATCSSSLLVLPNLRLSSNQRRNFKVR).

This sequence belongs to the diacylglycerol acyltransferase family. In terms of assembly, interacts with PGM48. As to expression, mostly expressed in flowers (e.g. sepals, petals and stamen).

The protein resides in the plastid. The protein localises to the chloroplast. Its subcellular location is the plastoglobule. It catalyses the reaction a 1,2-diacyl-3-O-(beta-D-galactosyl)-sn-glycerol + a 1,2-diacylglycerol = an acyl-3-O-(beta-D-galactosyl)-sn-glycerol + a triacylglycerol. The enzyme catalyses a 1,2-diacylglycerol + a fatty acyl-CoA = a triacylglycerol + CoA. The catalysed reaction is a fatty acyl-[ACP] + a 1,2-diacylglycerol = a triacylglycerol + holo-[ACP]. It carries out the reaction phytol + a fatty acyl-CoA = a fatty acid phytyl ester + CoA. It catalyses the reaction phytol + tetradecanoyl-CoA = tetradecanoate phytyl ester + CoA. The enzyme catalyses a 1,3-diacylglycerol + a fatty acyl-CoA = a triacylglycerol + CoA. The catalysed reaction is 1,2-dihexanoylglycerol + tetradecanoyl-CoA = 1,2-dihexanoyl-3-tetradecanoylglycerol + CoA. It carries out the reaction 1,2-dihexanoylglycerol + hexadecanoyl-CoA = 1,2-dihexanoyl-3-hexadecanoylglycerol + CoA. It catalyses the reaction 1,2-dihexanoylglycerol + octadecanoyl-CoA = 1,2-dihexanoyl-3-octadecanoylglycerol + CoA. The enzyme catalyses (7Z,10Z,13Z)-hexadecatrienoyl-CoA + 1,2-dihexanoylglycerol = 1,2-dihexanoyl-3-(7Z,10Z,13Z-hexadecatrienoyl)-glycerol + CoA. The catalysed reaction is 1,2-dihexanoylglycerol + (9Z)-octadecenoyl-CoA = 1,2-dihexanoyl-3-(9Z-octadecenoyl)-glycerol + CoA. It carries out the reaction 1,2-dihexanoylglycerol + (9Z,12Z,15Z)-octadecatrienoyl-CoA = 1,2-dihexanoyl-3-(9Z,12Z,15Z-octadecatrienoyl)-glycerol + CoA. It catalyses the reaction phytol + decanoyl-CoA = decanoate phytyl ester + CoA. The enzyme catalyses (7Z,10Z,13Z)-hexadecatrienoyl-CoA + phytol = (7Z,10Z,13Z)-hexadecatrienoate phytyl ester + CoA. The catalysed reaction is phytol + dodecanoyl-CoA = dodecanoate phytyl ester + CoA. Functionally, acyltransferase involved in fatty acid phytyl ester synthesis in chloroplasts, a process required for the maintenance of the photosynthetic membrane integrity during abiotic stress and senescence. Exhibits phytyl ester synthesis and diacylglycerol acyltransferase activities with broad substrate specificities, and can employ acyl-CoAs, acyl carrier proteins, and galactolipids as acyl donors. This is Phytyl ester synthase 1, chloroplastic from Arabidopsis thaliana (Mouse-ear cress).